The sequence spans 1032 residues: Serine/threonine-protein kinase ppk31 (1032 aa).

One can recognise a PAS domain in the interval 3-72 (NPEQLKRILS…KATDNLFRKS (70 aa)). Positions 528 to 877 (FILLKEINRG…YQEIKKHPFF (350 aa)) constitute a Protein kinase domain. Residues 534-542 (INRGAYGRV) and lysine 557 each bind ATP. Aspartate 652 (proton acceptor) is an active-site residue. Positions 938-963 (PKATPADSGTETSNSAAFSASEEETT) are disordered. Low complexity predominate over residues 947-957 (TETSNSAAFSA).

Belongs to the protein kinase superfamily. Ser/Thr protein kinase family.

The protein resides in the cytoplasm. It carries out the reaction L-seryl-[protein] + ATP = O-phospho-L-seryl-[protein] + ADP + H(+). It catalyses the reaction L-threonyl-[protein] + ATP = O-phospho-L-threonyl-[protein] + ADP + H(+). Its function is as follows. Has a role in meiosis. The sequence is that of Serine/threonine-protein kinase ppk31 (ppk31) from Schizosaccharomyces pombe (strain 972 / ATCC 24843) (Fission yeast).